Consider the following 369-residue polypeptide: Cyclin-I2 (369 aa).

Residues 1–116 (MASGAQLPPQ…SRKPRNLEGD (116 aa)) form a disordered region. 2 stretches are compositionally biased toward low complexity: residues 64 to 76 (AASLHAASAAVPV) and 83 to 101 (APAGKTADAVPAAAPEQAP).

It belongs to the cyclin family.

The sequence is that of Cyclin-I2 (CCNI2) from Homo sapiens (Human).